The following is a 1335-amino-acid chain: RNA replication protein (1335 aa).

The 168-residue stretch at 58 to 225 (NPYSLKLHPH…EHRYKDLNWL (168 aa)) folds into the Alphavirus-like MT domain. A disordered region spans residues 428–492 (GVSSEPTYTE…EEEPQRDDLP (65 aa)). Low complexity predominate over residues 453-466 (AAEPSATSDEPESS). Positions 564–729 (DVMAGKTGAI…VFGKFSRYHI (166 aa)) constitute a (+)RNA virus helicase ATP-binding domain. 603–610 (GAGGSGKS) is a binding site for ATP. Positions 730–863 (NATHRNPRNL…LNKEIKVTEG (134 aa)) constitute a (+)RNA virus helicase C-terminal domain. One can recognise a RdRp catalytic domain in the interval 1102–1209 (LPAYTNDFTA…NCRPVERQSF (108 aa)).

This sequence belongs to the potexviruses/carlaviruses RNA replication protein family.

It carries out the reaction RNA(n) + a ribonucleoside 5'-triphosphate = RNA(n+1) + diphosphate. The catalysed reaction is ATP + H2O = ADP + phosphate + H(+). Functionally, RNA replication. The central part of this protein possibly functions as an ATP-binding helicase. In Foxtail mosaic virus, this protein is RNA replication protein.